The chain runs to 94 residues: Co-chaperonin GroES (94 aa).

This sequence belongs to the GroES chaperonin family. Heptamer of 7 subunits arranged in a ring. Interacts with the chaperonin GroEL.

The protein localises to the cytoplasm. Together with the chaperonin GroEL, plays an essential role in assisting protein folding. The GroEL-GroES system forms a nano-cage that allows encapsulation of the non-native substrate proteins and provides a physical environment optimized to promote and accelerate protein folding. GroES binds to the apical surface of the GroEL ring, thereby capping the opening of the GroEL channel. This chain is Co-chaperonin GroES, found in Geobacillus sp. (strain WCH70).